A 203-amino-acid chain; its full sequence is Small ribosomal subunit protein uS4 (203 aa).

An S4 RNA-binding domain is found at 93–156 (RRLDNVVYRL…MKVPAILEAV (64 aa)).

It belongs to the universal ribosomal protein uS4 family. In terms of assembly, part of the 30S ribosomal subunit. Contacts protein S5. The interaction surface between S4 and S5 is involved in control of translational fidelity.

Functionally, one of the primary rRNA binding proteins, it binds directly to 16S rRNA where it nucleates assembly of the body of the 30S subunit. Its function is as follows. With S5 and S12 plays an important role in translational accuracy. This Streptococcus pyogenes serotype M4 (strain MGAS10750) protein is Small ribosomal subunit protein uS4.